Consider the following 1849-residue polypeptide: Mitogen-activated protein kinase kinase kinase mkh1 (1849 aa).

The Protein kinase domain maps to 1556-1825 (WFKGQLIGKG…TKLLAEHPFC (270 aa)). Residues 1562 to 1570 (IGKGTYGRV) and lysine 1585 contribute to the ATP site. The active-site Proton acceptor is the aspartate 1686.

Belongs to the protein kinase superfamily. STE Ser/Thr protein kinase family. MAP kinase kinase kinase subfamily.

The enzyme catalyses L-seryl-[protein] + ATP = O-phospho-L-seryl-[protein] + ADP + H(+). It carries out the reaction L-threonyl-[protein] + ATP = O-phospho-L-threonyl-[protein] + ADP + H(+). In terms of biological role, mitogen-activated protein kinase kinase kinase, part of the mkh1-mkk1-spm1 MAPK cascade that regulates vegetative growth, conidial formation, colony surface hydrophobicity, osmotic stress, cell wall integrity maintenance, carbon and nitrogen source utilization, chitin distribution, septa formation, and pathogenicity. The sequence is that of Mitogen-activated protein kinase kinase kinase mkh1 from Cytospora mali (Apple Valsa canker fungus).